The chain runs to 312 residues: tRNA-cytidine(32) 2-sulfurtransferase (312 aa).

The short motif at 39–44 is the PP-loop motif element; that stretch reads SGGKDS. [4Fe-4S] cluster contacts are provided by Cys114, Cys117, and Cys205.

It belongs to the TtcA family. Homodimer. It depends on Mg(2+) as a cofactor. Requires [4Fe-4S] cluster as cofactor.

Its subcellular location is the cytoplasm. It carries out the reaction cytidine(32) in tRNA + S-sulfanyl-L-cysteinyl-[cysteine desulfurase] + AH2 + ATP = 2-thiocytidine(32) in tRNA + L-cysteinyl-[cysteine desulfurase] + A + AMP + diphosphate + H(+). It participates in tRNA modification. Its function is as follows. Catalyzes the ATP-dependent 2-thiolation of cytidine in position 32 of tRNA, to form 2-thiocytidine (s(2)C32). The sulfur atoms are provided by the cysteine/cysteine desulfurase (IscS) system. In Ralstonia nicotianae (strain ATCC BAA-1114 / GMI1000) (Ralstonia solanacearum), this protein is tRNA-cytidine(32) 2-sulfurtransferase.